A 365-amino-acid polypeptide reads, in one-letter code: Protein BZR1 homolog 2 (365 aa).

Gly residues predominate over residues 1 to 30; sequence MATGGGGGGGGMGGGGVGGGAGAAGVGVGG. 4 disordered regions span residues 1–45, 113–154, 191–236, and 344–365; these read MATG…KRRE, SPSP…NMAN, SAPV…TPPS, and HEDS…RAAA. A required for DNA-binding region spans residues 31–113; that stretch reads RMPTWREREN…RMEVIGCSVS (83 aa). The segment covering 113–144 has biased composition (low complexity); sequence SPSPCSSYQPSPRASYNASPTSSSFPSGASSP. Composition is skewed to polar residues over residues 215-233 and 356-365; these read SNVQ…VNST and LGSSRTRAAA.

The protein belongs to the BZR/LAT61 family. As to quaternary structure, interacts with PUB24.

In terms of biological role, may function in brassinosteroid signaling. The protein is Protein BZR1 homolog 2 of Oryza sativa subsp. japonica (Rice).